The primary structure comprises 10061 residues: MATH and LRR domain-containing protein PFE0570w (10061 aa).

3 disordered regions span residues 166–210 (DMDN…EKKN), 244–471 (NNSD…NDIN), and 1004–1170 (DDQK…DTSF). Residues 169 to 179 (NNPNNHVSNNG) show a composition bias toward polar residues. Low complexity predominate over residues 193-205 (TSNSIHKNNNTNI). Over residues 270–282 (KKSDNNNDKKNDD) the composition is skewed to basic and acidic residues. The segment covering 285 to 320 (NNNNNNNNNNNNNNNNNDNHVCTSNNQPNTINKQNN) has biased composition (low complexity). A compositionally biased stretch (polar residues) spans 328 to 338 (DQNGRTKITPQ). Residues 338–366 (QNVNQKEKEIKNVVKEKNNFNREEKDITN) adopt a coiled-coil conformation. The span at 342–365 (QKEKEIKNVVKEKNNFNREEKDIT) shows a compositional bias: basic and acidic residues. Residues 366 to 375 (NSDDYDENST) show a composition bias toward acidic residues. Polar residues-rich tracts occupy residues 376-389 (DESC…TSSE) and 421-437 (VPSN…SAEN). Residues 431 to 469 (NVKSAENCNKEKKKKKKKKKKELNNDNKDNTLNNETMND) adopt a coiled-coil conformation. The span at 441–451 (EKKKKKKKKKK) shows a compositional bias: basic residues. A compositionally biased stretch (low complexity) spans 460–471 (NTLNNETMNDIN). Residues 1025-1037 (NEEKPNVNKEGNI) are compositionally biased toward basic and acidic residues. The span at 1047–1057 (NKNKNNNNNNN) shows a compositional bias: low complexity. Positions 1058–1132 (DKNDKNDKND…KKKKNGKEQN (75 aa)) are enriched in basic and acidic residues. Over residues 1133–1165 (EDSTESDDESSVIDDNYIDDDSCDCDSESDSID) the composition is skewed to acidic residues. Residues 1328–1458 (NGKIELYIPN…SGGLLIKGKV (131 aa)) enclose the MATH domain. A disordered region spans residues 1651-1698 (GGNLQNEQKGDEDVKKEDVKKENVNKEEIKNGNNNNNNDENENEVDDN). Residues 1658–1680 (QKGDEDVKKEDVKKENVNKEEIK) are compositionally biased toward basic and acidic residues. The stretch at 1916 to 1948 (NYLSNLNKVKININDLNNNIVDVNNSIHNIEKE) forms a coiled coil. Over residues 1973–1995 (HKETSSIQNKGKEKSNNNIKSDD) the composition is skewed to basic and acidic residues. Disordered regions lie at residues 1973-1998 (HKET…DNNN), 2155-2245 (LNKS…PSYK), 2427-2566 (YSDD…NNIK), and 3120-3139 (SNET…NEMK). A compositionally biased stretch (acidic residues) spans 2216 to 2228 (NNDDKDDDDDDSY). Residues 2235–2245 (SDGKKNDPSYK) show a composition bias toward basic and acidic residues. Over residues 2475–2484 (NNNNNNNNMM) the composition is skewed to low complexity. Composition is skewed to basic and acidic residues over residues 2487 to 2496 (DDNKVNKNEE) and 2505 to 2527 (QIKE…RNED). Low complexity-rich tracts occupy residues 2552 to 2564 (NNNN…NNNN) and 3121 to 3133 (NETN…NRTN). The stretch at 2555 to 2580 (NNNNNNNNNNIKRLDDSYNKLLKNKN) forms a coiled coil. Residues 3398–3418 (KLILKKIFMYLNIICMIIKYI) form a helical membrane-spanning segment. Disordered stretches follow at residues 3802-3826 (STND…YSKK), 3847-3890 (LTSG…DNNN), and 3919-3953 (ESND…EKKS). Basic and acidic residues predominate over residues 3809 to 3822 (VDRSDDSESNDDKK). Residues 3851 to 3890 (NSSSKNSKKNSNNESIQMDNTNNSNSNNNNKNDNNNDNNN) are compositionally biased toward low complexity. Polar residues predominate over residues 3926-3941 (KNQNIQSNEQSVTPNR). The span at 3942–3953 (NIEENKDHEKKS) shows a compositional bias: basic and acidic residues. The stretch at 3977-4001 (EHLGNATAVLNILQKKLENEELKKL) forms a coiled coil. The segment covering 4039 to 4065 (VSAHKEKNVKTDSSDDKKKKEDNENNN) has biased composition (basic and acidic residues). Disordered stretches follow at residues 4039–4074 (VSAH…IIHN), 4155–4180 (KGNN…NNMG), 4352–4414 (SNNN…NNNN), 4919–4943 (NKRK…DNDN), 4991–5030 (DGLN…KNEK), and 5179–5207 (SKIA…KSNL). Over residues 4157 to 4178 (NNSKDNNNNNNNNNNNNNNKNN) the composition is skewed to low complexity. Residues 4399 to 4424 (NNNNNNNNNNNNNNNNVNKEIIKLNS) are a coiled coil. 3 stretches are compositionally biased toward low complexity: residues 4929–4943 (NNNN…DNDN), 5004–5019 (NMNN…NNSN), and 5185–5202 (NGNN…NNNN). Positions 5006–5046 (NNVKNKNNNNNNSNNKRKKNEKNEKIDKIEQFLHESELEKD) form a coiled coil. Coiled-coil stretches lie at residues 5486–5563 (NNNN…NIYE), 5728–5810 (DVLK…DKEE), and 5900–6022 (MNND…INNY). 3 stretches are compositionally biased toward basic and acidic residues: residues 5716 to 5732 (KDAK…VLKD), 5738 to 5811 (SNKE…KEEP), and 5909 to 5953 (NKNK…KKDN). Disordered stretches follow at residues 5716–5816 (KDAK…QINE), 5892–6009 (EIIN…KKLK), 6123–6142 (KSET…VDGK), 6299–6338 (NDSI…DKGE), 6722–6760 (NMNN…NNNI), 7585–7730 (EDML…VEEK), and 7744–7787 (DLLS…KKSS). Low complexity predominate over residues 5954–5968 (NNSNNNNNNNNLSNN). Acidic residues predominate over residues 5969–5978 (GEEDPNDSDS). Over residues 5991-6003 (NKNINDDSDDNNK) the composition is skewed to basic and acidic residues. The segment covering 6129–6138 (SNKNVESNDN) has biased composition (polar residues). Composition is skewed to low complexity over residues 6314–6333 (SNSN…NNNN) and 6722–6759 (NMNN…NNNN). Positions 6719-6743 (NMNNMNNNNNNNNNNNNNNNNNNNN) form a coiled coil. Positions 7585–7599 (EDMLHSKKTDVIQHG) are enriched in basic and acidic residues. A compositionally biased stretch (acidic residues) spans 7600 to 7685 (DEEEDDEEDD…EHINEEEQED (86 aa)). 4 coiled-coil regions span residues 7601-7637 (EEED…DIED), 7710-7813 (NTKI…NKNE), 7934-7961 (KTDE…IDNE), and 8217-8241 (NINN…GKRE). The span at 7749-7765 (SKKKNHKDKRNASKNKN) shows a compositional bias: basic residues. The segment covering 7766–7786 (KNKDILKKNENNINDEKEKKS) has biased composition (basic and acidic residues). Disordered stretches follow at residues 8189-8252 (ETGG…GGEE), 8293-8380 (GKVS…IIMS), and 8474-8497 (KKKN…MDEE). The span at 8218 to 8242 (INNKEKETNKNEEQQQGEAEGKREG) shows a compositional bias: basic and acidic residues. A compositionally biased stretch (acidic residues) spans 8243–8252 (EGEEGEGGEE). The segment covering 8305–8314 (LLNDKEHEKD) has biased composition (basic and acidic residues). A compositionally biased stretch (acidic residues) spans 8315–8363 (NEDNDEDNDEDDDDEDDDEDDEDDDDDDDDDDDDDDDDDYDEDYDEDYD). The segment covering 8364–8374 (EKLVENKKNER) has biased composition (basic and acidic residues). Residues 8478–8492 (YSNNNIYNNNSSNKV) show a composition bias toward low complexity. Coiled-coil stretches lie at residues 8644–8697 (SETL…ELNN), 8882–8907 (QYLE…VDNY), and 9219–9247 (IDMK…SNNN). Disordered stretches follow at residues 9759–9779 (TIPR…NNNS), 9891–9926 (SNTS…SSSN), and 9985–10061 (KNNS…NNIY). 3 stretches are compositionally biased toward low complexity: residues 9764–9779 (NTTT…NNNS), 9899–9926 (NSSN…SSSN), and 9986–10022 (NNSI…NNNT). Polar residues predominate over residues 10031 to 10041 (IFQQNQNHSDT). A compositionally biased stretch (low complexity) spans 10042–10061 (NNNNNNNNKNNSNNNNNNIY).

The protein resides in the membrane. The polypeptide is MATH and LRR domain-containing protein PFE0570w (Plasmodium falciparum (isolate 3D7)).